We begin with the raw amino-acid sequence, 176 residues long: Endoribonuclease YbeY (176 aa).

Positions 128, 132, and 138 each coordinate Zn(2+).

This sequence belongs to the endoribonuclease YbeY family. Zn(2+) is required as a cofactor.

It localises to the cytoplasm. Functionally, single strand-specific metallo-endoribonuclease involved in late-stage 70S ribosome quality control and in maturation of the 3' terminus of the 16S rRNA. The polypeptide is Endoribonuclease YbeY (Zymomonas mobilis subsp. mobilis (strain ATCC 31821 / ZM4 / CP4)).